The following is a 234-amino-acid chain: uncharacterized protein (234 aa).

A run of 4 helical transmembrane segments spans residues 22-42 (TFLN…IPLI), 59-79 (INWA…AYLI), 154-174 (FWIF…IFFC), and 186-206 (LLSL…IFAL).

The protein localises to the cell membrane. This is an uncharacterized protein from Escherichia coli (strain K12).